A 182-amino-acid polypeptide reads, in one-letter code: ATP synthase subunit delta (182 aa).

This sequence belongs to the ATPase delta chain family. As to quaternary structure, F-type ATPases have 2 components, F(1) - the catalytic core - and F(0) - the membrane proton channel. F(1) has five subunits: alpha(3), beta(3), gamma(1), delta(1), epsilon(1). F(0) has three main subunits: a(1), b(2) and c(10-14). The alpha and beta chains form an alternating ring which encloses part of the gamma chain. F(1) is attached to F(0) by a central stalk formed by the gamma and epsilon chains, while a peripheral stalk is formed by the delta and b chains.

The protein resides in the cell inner membrane. In terms of biological role, f(1)F(0) ATP synthase produces ATP from ADP in the presence of a proton or sodium gradient. F-type ATPases consist of two structural domains, F(1) containing the extramembraneous catalytic core and F(0) containing the membrane proton channel, linked together by a central stalk and a peripheral stalk. During catalysis, ATP synthesis in the catalytic domain of F(1) is coupled via a rotary mechanism of the central stalk subunits to proton translocation. Its function is as follows. This protein is part of the stalk that links CF(0) to CF(1). It either transmits conformational changes from CF(0) to CF(1) or is implicated in proton conduction. The chain is ATP synthase subunit delta from Myxococcus xanthus (strain DK1622).